Here is a 62-residue protein sequence, read N- to C-terminus: Photosystem II reaction center protein Z (62 aa).

2 helical membrane passes run 8–28 (AVFALIATSLILLISVPVVFA) and 41–61 (FSGTSLWIGLVFLVAILNSLI).

The protein belongs to the PsbZ family. In terms of assembly, PSII is composed of 1 copy each of membrane proteins PsbA, PsbB, PsbC, PsbD, PsbE, PsbF, PsbH, PsbI, PsbJ, PsbK, PsbL, PsbM, PsbT, PsbY, PsbZ, Psb30/Ycf12, at least 3 peripheral proteins of the oxygen-evolving complex and a large number of cofactors. It forms dimeric complexes.

It localises to the plastid. The protein localises to the chloroplast thylakoid membrane. In terms of biological role, may control the interaction of photosystem II (PSII) cores with the light-harvesting antenna, regulates electron flow through the 2 photosystem reaction centers. PSII is a light-driven water plastoquinone oxidoreductase, using light energy to abstract electrons from H(2)O, generating a proton gradient subsequently used for ATP formation. This is Photosystem II reaction center protein Z from Phalaenopsis aphrodite subsp. formosana (Moth orchid).